A 257-amino-acid polypeptide reads, in one-letter code: Myosin-8 (257 aa).

Residues Arg1–Glu257 adopt a coiled-coil conformation. Phosphoserine occurs at positions 33, 45, and 58.

Muscle myosin is a hexameric protein that consists of 2 heavy chain subunits (MHC), 2 alkali light chain subunits (MLC) and 2 regulatory light chain subunits (MLC-2).

Its subcellular location is the cytoplasm. It localises to the myofibril. Muscle contraction. The polypeptide is Myosin-8 (Myh8) (Rattus norvegicus (Rat)).